The following is a 538-amino-acid chain: Phosphoenolpyruvate carboxykinase (ATP) (538 aa).

Substrate contacts are provided by Arg-61, Tyr-195, and Lys-201. ATP-binding positions include Lys-201, His-220, and 236–244; that span reads GLSGTGKTT. Mn(2+)-binding residues include Lys-201 and His-220. Residue Asp-257 participates in Mn(2+) binding. Glu-285, Arg-323, and Thr-449 together coordinate ATP. Arg-323 provides a ligand contact to substrate.

The protein belongs to the phosphoenolpyruvate carboxykinase (ATP) family. Requires Mn(2+) as cofactor.

The protein localises to the cytoplasm. It catalyses the reaction oxaloacetate + ATP = phosphoenolpyruvate + ADP + CO2. It participates in carbohydrate biosynthesis; gluconeogenesis. Functionally, involved in the gluconeogenesis. Catalyzes the conversion of oxaloacetate (OAA) to phosphoenolpyruvate (PEP) through direct phosphoryl transfer between the nucleoside triphosphate and OAA. This is Phosphoenolpyruvate carboxykinase (ATP) from Nitrobacter hamburgensis (strain DSM 10229 / NCIMB 13809 / X14).